The sequence spans 361 residues: Peptide chain release factor 1 (361 aa).

Gln235 carries the N5-methylglutamine modification. Positions 286-305 (IDSARSAERKQKVGSGDRSE) are disordered.

The protein belongs to the prokaryotic/mitochondrial release factor family. In terms of processing, methylated by PrmC. Methylation increases the termination efficiency of RF1.

The protein resides in the cytoplasm. Peptide chain release factor 1 directs the termination of translation in response to the peptide chain termination codons UAG and UAA. The chain is Peptide chain release factor 1 from Rhodopseudomonas palustris (strain HaA2).